A 302-amino-acid chain; its full sequence is Sulfate adenylyltransferase subunit 2 (302 aa).

The protein belongs to the PAPS reductase family. CysD subfamily. As to quaternary structure, heterodimer composed of CysD, the smaller subunit, and CysN.

The enzyme catalyses sulfate + ATP + H(+) = adenosine 5'-phosphosulfate + diphosphate. Its pathway is sulfur metabolism; hydrogen sulfide biosynthesis; sulfite from sulfate: step 1/3. Functionally, with CysN forms the ATP sulfurylase (ATPS) that catalyzes the adenylation of sulfate producing adenosine 5'-phosphosulfate (APS) and diphosphate, the first enzymatic step in sulfur assimilation pathway. APS synthesis involves the formation of a high-energy phosphoric-sulfuric acid anhydride bond driven by GTP hydrolysis by CysN coupled to ATP hydrolysis by CysD. This is Sulfate adenylyltransferase subunit 2 from Xanthomonas campestris pv. campestris (strain 8004).